We begin with the raw amino-acid sequence, 129 residues long: uncharacterized protein (129 aa).

The first 21 residues, 1–21 (MAQNKTIAVALLLATLVAVMG), serve as a signal peptide directing secretion.

This is an uncharacterized protein from Oryza sativa subsp. japonica (Rice).